A 195-amino-acid chain; its full sequence is Auxin-responsive protein IAA14 (195 aa).

Disordered stretches follow at residues 1–61 (MAAE…SPAS) and 85–107 (STAAAAKGKGGGETDQGRKNKGG). The EAR-like (transcriptional repression) motif lies at 10–14 (LRLGL). The PB1 domain occupies 108-191 (GLYVKVSMDG…SCKKLRIMRG (84 aa)).

This sequence belongs to the Aux/IAA family. As to quaternary structure, homodimers and heterodimers. As to expression, highly expressed in flowers. Expressed in etiolated seedlings.

Its subcellular location is the nucleus. Aux/IAA proteins are short-lived transcriptional factors that function as repressors of early auxin response genes at low auxin concentrations. In Oryza sativa subsp. japonica (Rice), this protein is Auxin-responsive protein IAA14 (IAA14).